A 161-amino-acid polypeptide reads, in one-letter code: Ribosome maturation factor RimP (161 aa).

This sequence belongs to the RimP family.

Its subcellular location is the cytoplasm. Required for maturation of 30S ribosomal subunits. The sequence is that of Ribosome maturation factor RimP from Rickettsia massiliae (strain Mtu5).